The sequence spans 439 residues: GTPase Obg (439 aa).

The Obg domain occupies 4–162 (IEFIDVVDIY…KHIQLELKLL (159 aa)). The OBG-type G domain occupies 163 to 336 (ADVGLIGYPN…LKYAMWDIIK (174 aa)). GTP contacts are provided by residues 169 to 176 (GYPNVGKS), 194 to 198 (FTTLV), 218 to 221 (DIPG), 288 to 291 (NKSD), and 317 to 319 (SAV). Residues Ser-176 and Thr-196 each contribute to the Mg(2+) site. The region spanning 361-439 (LVLPDRVDIK…VEGVDFIFKE (79 aa)) is the OCT domain.

The protein belongs to the TRAFAC class OBG-HflX-like GTPase superfamily. OBG GTPase family. Monomer. Requires Mg(2+) as cofactor.

The protein resides in the cytoplasm. Functionally, an essential GTPase which binds GTP, GDP and possibly (p)ppGpp with moderate affinity, with high nucleotide exchange rates and a fairly low GTP hydrolysis rate. Plays a role in control of the cell cycle, stress response, ribosome biogenesis and in those bacteria that undergo differentiation, in morphogenesis control. This Fervidobacterium nodosum (strain ATCC 35602 / DSM 5306 / Rt17-B1) protein is GTPase Obg.